Here is a 621-residue protein sequence, read N- to C-terminus: CEP295 N-terminal-like protein (621 aa).

Residues 142 to 253 form a disordered region; the sequence is GGRARENEPD…RSKGADLERS (112 aa). Basic residues predominate over residues 159–170; that stretch reads RSARPPRAKEKH. The segment covering 171-185 has biased composition (basic and acidic residues); sequence RAALSEERSCREELG. Positions 203 to 213 are enriched in polar residues; that stretch reads KPQTTKATGRM. Residues 219-229 show a composition bias toward basic and acidic residues; the sequence is PPEKRKGRPEP. A coiled-coil region spans residues 328–359; it reads QCTLREKNKWQKELELAFEELFNINRKLKKHL. Disordered regions lie at residues 385–421, 491–529, and 543–586; these read CGAG…ASKT, DQAD…PDMS, and REQR…DRHS. A coiled-coil region spans residues 498–525; sequence STASRQRQKAEMEQRRQKQLESLEQMEH. The segment covering 505–529 has biased composition (basic and acidic residues); it reads QKAEMEQRRQKQLESLEQMEHPDMS. Over residues 568-578 the composition is skewed to polar residues; sequence ELSTTSPSGTS.

Its subcellular location is the cell projection. It localises to the cilium. The chain is CEP295 N-terminal-like protein from Homo sapiens (Human).